Consider the following 432-residue polypeptide: PC-esterase domain-containing protein 1B (432 aa).

Disordered stretches follow at residues 264-293 (EWIK…LSPP) and 398-432 (RGFG…PRPQ).

Belongs to the PC-esterase family.

The polypeptide is PC-esterase domain-containing protein 1B (Homo sapiens (Human)).